The following is a 500-amino-acid chain: Serine/threonine-protein phosphatase 2A 56 kDa regulatory subunit beta isoform (500 aa).

Residues 1 to 19 (METKLPPASTPTSPSSPGL) are compositionally biased toward low complexity. Disordered regions lie at residues 1–55 (METK…YQSN) and 474–500 (GTQG…GGQS). A phosphoserine; by CLK2 mark is found at serine 32, serine 35, serine 44, serine 46, serine 47, and serine 48. A compositionally biased stretch (basic residues) spans 34–45 (RSLRRARPRRSH).

This sequence belongs to the phosphatase 2A regulatory subunit B56 family. As to quaternary structure, component of the serine/threonine-protein phosphatase 2A complex (PP2A). This complex consists of a common heterodimeric core enzyme, composed of a 36 kDa catalytic subunit (subunit C) and a 65 kDa constant scaffold subunit (PR65 or subunit A), that associates with a variety of regulatory subunits. Proteins that associate with the core dimer include three families of regulatory subunits B (the R2/B/PR55/B55, R3/B''/PR72/PR130/PR59 and R5/B'/B56 families), the 48 kDa variable regulatory subunit, viral proteins, and cell signaling molecules. Interacts with SGO1. Interacts with AKT1. As to expression, highly expressed in brain.

It localises to the nucleus. In terms of biological role, as the regulatory component of the serine/threonine-protein phosphatase 2A (PP2A) holoenzyme, modulates substrate specificity, subcellular localization, and responsiveness to phosphorylation. The phosphorylated form mediates the interaction between PP2A and AKT1, leading to AKT1 dephosphorylation. In Oryctolagus cuniculus (Rabbit), this protein is Serine/threonine-protein phosphatase 2A 56 kDa regulatory subunit beta isoform (PPP2R5B).